The primary structure comprises 372 residues: Glutamate 5-kinase (372 aa).

Residue Lys14 participates in ATP binding. Residues Ser54, Asp141, and Asn153 each coordinate substrate. 173-174 (TD) is a binding site for ATP. Residues 280 to 358 (RGHVVIDAGA…GEIETVLGYM (79 aa)) form the PUA domain.

It belongs to the glutamate 5-kinase family.

Its subcellular location is the cytoplasm. The catalysed reaction is L-glutamate + ATP = L-glutamyl 5-phosphate + ADP. Its pathway is amino-acid biosynthesis; L-proline biosynthesis; L-glutamate 5-semialdehyde from L-glutamate: step 1/2. Functionally, catalyzes the transfer of a phosphate group to glutamate to form L-glutamate 5-phosphate. The polypeptide is Glutamate 5-kinase (Burkholderia vietnamiensis (strain G4 / LMG 22486) (Burkholderia cepacia (strain R1808))).